The sequence spans 452 residues: Phosphoglucosamine mutase (452 aa).

The active-site Phosphoserine intermediate is S103. Positions 103, 244, 246, and 248 each coordinate Mg(2+). The residue at position 103 (S103) is a Phosphoserine.

This sequence belongs to the phosphohexose mutase family. Mg(2+) is required as a cofactor. In terms of processing, activated by phosphorylation.

It catalyses the reaction alpha-D-glucosamine 1-phosphate = D-glucosamine 6-phosphate. Functionally, catalyzes the conversion of glucosamine-6-phosphate to glucosamine-1-phosphate. The protein is Phosphoglucosamine mutase of Rhodospirillum rubrum (strain ATCC 11170 / ATH 1.1.1 / DSM 467 / LMG 4362 / NCIMB 8255 / S1).